Here is a 339-residue protein sequence, read N- to C-terminus: Anthranilate phosphoribosyltransferase (339 aa).

5-phospho-alpha-D-ribose 1-diphosphate contacts are provided by residues G80, 83–84 (GD), T88, 90–93 (NIST), 108–116 (KHGNRAVSS), and S120. G80 contributes to the anthranilate binding site. Residue S92 coordinates Mg(2+). Residue N111 coordinates anthranilate. R166 is an anthranilate binding site. Residues D225 and E226 each contribute to the Mg(2+) site.

Belongs to the anthranilate phosphoribosyltransferase family. In terms of assembly, homodimer. Mg(2+) serves as cofactor.

It catalyses the reaction N-(5-phospho-beta-D-ribosyl)anthranilate + diphosphate = 5-phospho-alpha-D-ribose 1-diphosphate + anthranilate. It functions in the pathway amino-acid biosynthesis; L-tryptophan biosynthesis; L-tryptophan from chorismate: step 2/5. Catalyzes the transfer of the phosphoribosyl group of 5-phosphorylribose-1-pyrophosphate (PRPP) to anthranilate to yield N-(5'-phosphoribosyl)-anthranilate (PRA). The polypeptide is Anthranilate phosphoribosyltransferase (Caldanaerobacter subterraneus subsp. tengcongensis (strain DSM 15242 / JCM 11007 / NBRC 100824 / MB4) (Thermoanaerobacter tengcongensis)).